The chain runs to 134 residues: Gastrin-releasing peptide (134 aa).

Positions 1–23 (MRSREVSLVLLALVLCPAPRGSA) are cleaved as a signal peptide. Met-50 is subject to Methionine amide. The propeptide occupies 54 to 134 (SVAESPQLRE…QREGGNPQLY (81 aa)). A disordered region spans residues 98–134 (PPRWEPLSIHQPAWDSKDVSNFKDSGSQREGGNPQLY). The segment covering 119–134 (FKDSGSQREGGNPQLY) has biased composition (polar residues).

The protein belongs to the bombesin/neuromedin-B/ranatensin family.

Its subcellular location is the secreted. The protein resides in the cytoplasmic vesicle. It is found in the secretory vesicle lumen. The protein localises to the cell projection. It localises to the neuron projection. Stimulates the release of gastrin and other gastrointestinal hormones. Contributes to the perception of prurient stimuli and to the transmission of itch signals in the spinal cord that promote scratching behavior. Contributes primarily to nonhistaminergic itch sensation. In one study, shown to act in the amygdala as part of an inhibitory network which inhibits memory specifically related to learned fear. In another study, shown to act on vasoactive intestinal peptide (VIP)-expressing cells in the auditory cortex, most likely via extrasynaptic diffusion from local and long-range sources, to mediate disinhibition of glutamatergic cells via VIP cell-specific GRPR signaling which leads to enhanced auditory fear memories. Contributes to the regulation of food intake. Inhibits voltage-gated sodium channels but enhances voltage-gated potassium channels in hippocampal neurons. Induces sighing by acting directly on the pre-Botzinger complex, a cluster of several thousand neurons in the ventrolateral medulla responsible for inspiration during respiratory activity. Functionally, induces an itch response through activation of receptors present on mast cells, triggering mast cell degranulation. In Ovis aries (Sheep), this protein is Gastrin-releasing peptide (GRP).